Reading from the N-terminus, the 360-residue chain is Peptide chain release factor 1 (360 aa).

The residue at position 235 (Q235) is an N5-methylglutamine. The tract at residues 281–310 (AERQRQDAAQAESRRLQVGSGDRSQRIRTY) is disordered.

Belongs to the prokaryotic/mitochondrial release factor family. Methylated by PrmC. Methylation increases the termination efficiency of RF1.

The protein localises to the cytoplasm. Peptide chain release factor 1 directs the termination of translation in response to the peptide chain termination codons UAG and UAA. This is Peptide chain release factor 1 from Stenotrophomonas maltophilia (strain R551-3).